A 384-amino-acid chain; its full sequence is N-acetyldiaminopimelate deacetylase (384 aa).

Asp75 is a catalytic residue. Residue Glu134 is the Proton acceptor of the active site.

Belongs to the peptidase M20A family. N-acetyldiaminopimelate deacetylase subfamily.

It carries out the reaction N-acetyl-(2S,6S)-2,6-diaminopimelate + H2O = (2S,6S)-2,6-diaminopimelate + acetate. It functions in the pathway amino-acid biosynthesis; L-lysine biosynthesis via DAP pathway; LL-2,6-diaminopimelate from (S)-tetrahydrodipicolinate (acetylase route): step 3/3. Its function is as follows. Catalyzes the conversion of N-acetyl-diaminopimelate to diaminopimelate and acetate. This is N-acetyldiaminopimelate deacetylase from Lactobacillus helveticus (strain DPC 4571).